A 626-amino-acid chain; its full sequence is Janus kinase and microtubule-interacting protein 1 (626 aa).

The tract at residues 1 to 25 is disordered; that stretch reads MSKKGRSKGDKPEAETDSVQMANEE. Residues 1–365 form a mediates association with microtubules region; sequence MSKKGRSKGD…KLKSLTRENV (365 aa). Coiled coils occupy residues 13-255 and 284-413; these read EAET…EAER and ERDV…DDLS. Residues 365–626 are mediates interaction with TYK2 and GABBR1; sequence VEMKEKLSAQ…ILFEPKLKFM (262 aa). Ser382 bears the Phosphoserine mark. Residues 452–461 are compositionally biased toward polar residues; sequence ETLSETSYNT. Residues 452 to 481 form a disordered region; it reads ETLSETSYNTDRTDRTPATPEEDLDETTTR. Phosphothreonine is present on Thr470. A coiled-coil region spans residues 490–604; the sequence is QLTREYQALQ…EFRVLELEVR (115 aa).

The protein belongs to the JAKMIP family. As to quaternary structure, homodimer. Interacts with JAK1 and TYK2. Forms a complex with GABBR1 and KIF5B/kinesin-1. Post-translationally, phosphorylated.

It is found in the cytoplasm. It localises to the cytoskeleton. The protein localises to the membrane. Functionally, associates with microtubules and may play a role in the microtubule-dependent transport of the GABA-B receptor. May play a role in JAK1 signaling and regulate microtubule cytoskeleton rearrangements. The sequence is that of Janus kinase and microtubule-interacting protein 1 (Jakmip1) from Mus musculus (Mouse).